The sequence spans 155 residues: Deoxyuridine 5'-triphosphate nucleotidohydrolase (155 aa).

Substrate is bound by residues 75-77 (RSG), N88, and 92-94 (TVD).

This sequence belongs to the dUTPase family. It depends on Mg(2+) as a cofactor.

The enzyme catalyses dUTP + H2O = dUMP + diphosphate + H(+). The protein operates within pyrimidine metabolism; dUMP biosynthesis; dUMP from dCTP (dUTP route): step 2/2. In terms of biological role, this enzyme is involved in nucleotide metabolism: it produces dUMP, the immediate precursor of thymidine nucleotides and it decreases the intracellular concentration of dUTP so that uracil cannot be incorporated into DNA. The polypeptide is Deoxyuridine 5'-triphosphate nucleotidohydrolase (Caulobacter vibrioides (strain ATCC 19089 / CIP 103742 / CB 15) (Caulobacter crescentus)).